The primary structure comprises 635 residues: Threonine--tRNA ligase (635 aa).

The TGS domain maps to 1–61 (MIKITLKDGK…HKDSSLEILT (61 aa)). The catalytic stretch occupies residues 242–532 (DHRKLGKELD…LIEQYAGAFP (291 aa)). 3 residues coordinate Zn(2+): cysteine 333, histidine 384, and histidine 509.

This sequence belongs to the class-II aminoacyl-tRNA synthetase family. As to quaternary structure, homodimer. The cofactor is Zn(2+).

The protein resides in the cytoplasm. The enzyme catalyses tRNA(Thr) + L-threonine + ATP = L-threonyl-tRNA(Thr) + AMP + diphosphate + H(+). Its function is as follows. Catalyzes the attachment of threonine to tRNA(Thr) in a two-step reaction: L-threonine is first activated by ATP to form Thr-AMP and then transferred to the acceptor end of tRNA(Thr). Also edits incorrectly charged L-seryl-tRNA(Thr). The chain is Threonine--tRNA ligase from Clostridium botulinum (strain Loch Maree / Type A3).